Consider the following 110-residue polypeptide: Large ribosomal subunit protein uL22 (110 aa).

The protein belongs to the universal ribosomal protein uL22 family. As to quaternary structure, part of the 50S ribosomal subunit.

Functionally, this protein binds specifically to 23S rRNA; its binding is stimulated by other ribosomal proteins, e.g. L4, L17, and L20. It is important during the early stages of 50S assembly. It makes multiple contacts with different domains of the 23S rRNA in the assembled 50S subunit and ribosome. In terms of biological role, the globular domain of the protein is located near the polypeptide exit tunnel on the outside of the subunit, while an extended beta-hairpin is found that lines the wall of the exit tunnel in the center of the 70S ribosome. This chain is Large ribosomal subunit protein uL22, found in Syntrophotalea carbinolica (strain DSM 2380 / NBRC 103641 / GraBd1) (Pelobacter carbinolicus).